A 541-amino-acid chain; its full sequence is Chaperonin GroEL (541 aa).

Residues 29–32 (TIGP), 86–90 (DGTTT), glycine 413, 478–480 (NAA), and aspartate 494 contribute to the ATP site.

This sequence belongs to the chaperonin (HSP60) family. In terms of assembly, forms a cylinder of 14 subunits composed of two heptameric rings stacked back-to-back. Interacts with the co-chaperonin GroES.

The protein resides in the cytoplasm. The enzyme catalyses ATP + H2O + a folded polypeptide = ADP + phosphate + an unfolded polypeptide.. Its function is as follows. Together with its co-chaperonin GroES, plays an essential role in assisting protein folding. The GroEL-GroES system forms a nano-cage that allows encapsulation of the non-native substrate proteins and provides a physical environment optimized to promote and accelerate protein folding. This chain is Chaperonin GroEL, found in Oenococcus oeni (strain ATCC BAA-331 / PSU-1).